The sequence spans 198 residues: Interferon gamma (198 aa).

The signal sequence occupies residues 1–23 (MMVSTARAVVCLSLCLCVCQVRG). Asparagine 31, asparagine 42, and asparagine 174 each carry an N-linked (GlcNAc...) asparagine glycan. Positions 173-198 (SNNTKMQRRRRRRRRQARKVKTPTRA) are disordered. Basic residues predominate over residues 178–198 (MQRRRRRRRRQARKVKTPTRA).

Belongs to the type II (or gamma) interferon family. In terms of assembly, homodimer.

The protein localises to the secreted. Cytokine which binds to interferon gamma receptor 1 (ifngr1). Also binds with lower affinity to interferon gamma receptor 1-like (ifngr1l). Has activating effects on macrophages and neutrophils. In Paralichthys olivaceus (Bastard halibut), this protein is Interferon gamma.